Consider the following 453-residue polypeptide: Alpha-glucosidase (453 aa).

An NAD(+)-binding site is contributed by 3–69; it reads TKIVLVGAGS…LPFIVSATTD (67 aa). Residue asparagine 149 participates in substrate binding. Cysteine 171 is a Mn(2+) binding site. The Proton donor role is filled by histidine 172. Histidine 201 lines the Mn(2+) pocket.

As to quaternary structure, homotetramer. The cofactor is Mn(2+). Co(2+) is required as a cofactor. Ca(2+) serves as cofactor. It depends on Fe(2+) as a cofactor. Requires Mg(2+) as cofactor. The cofactor is Sr(2+). Ni(2+) is required as a cofactor. NAD(+) serves as cofactor.

It catalyses the reaction Hydrolysis of terminal, non-reducing (1-&gt;4)-linked alpha-D-glucose residues with release of alpha-D-glucose.. It functions in the pathway glycan degradation; palatinose degradation. With respect to regulation, is inhibited by EDTA in vitro. Functionally, alpha-glucosidase with broad specificity. Hydrolyzes maltose, palatinose, maltulose, trehalose, trehalulose, turanose, leucrose, sucrose and maltitol. Is not active against alpha-galactosides, e.g. melibiose, and alpha-mannosides. Shows an obligate requirement for an O-alpha-glycosidic linkage, since it is not able to cleave beta-glycosidic bonds (cellobiose, gentiobiose, lactose, sophorose or laminaribiose). Cannot hydrolyze phosphorylated alpha-glucosides derivatives. Seems to be involved in the degradation of palatinose, a sucrose isomer that is formed as a reserve material under conditions of excess carbon availability, sequestered in a form unavailable to competitors such as fungi or the host plant, and whose consumption appears to be postponed until the preferentially metabolized carbon source (e.g. sucrose) is depleted. This Erwinia rhapontici (Pectobacterium rhapontici) protein is Alpha-glucosidase (palH).